The sequence spans 131 residues: Torsin-1A-interacting protein 2, isoform IFRG15 (131 aa).

In Mus musculus (Mouse), this protein is Torsin-1A-interacting protein 2, isoform IFRG15 (Tor1aip2).